The following is a 701-amino-acid chain: MKSFTVIALAAVALLATLGQAKHLDSKVADKDFLMKQKFMYQILQHIYQDDVFTTPFGGSYVEYKPWEHVADYVHPEMLEHFFELWQHQPFTDDMVWSVMYDKHEEYVVGLVRLFYFAKNWETFQHVVYWARQHVNKQLFVYAVTIASLFRDDMQGVVLPAHYEIHPWSYFDSQALEWAEHYKMHGFHHVKQMDNIYNVVIRTNYSNVHGSLNYDHDLAYYLEDVGFNAFYYYFNLDYPFWTKGGEEHVLNKDRRGELYLYVHWQLLARWYLERLSHDLGEVPAFNMYVPTESGYASNLRTYYGVPQWHRENHHSFYHEHNYEHIEHVEMYTQRVMDWIHKNEKFDVETINVLGNIIQGNADSVDKKFYGSLDKLYRFIVNEGHHYGHGDESFPGLFMHYDTSMRDPIFYEVYKTIVSHYWHLMETYPEYHKKDYAFEGVHIDAVHMPESLTTYFEHFDSDISNAVNVEPAVEGSADPLYTFGRNSHYKGSSYVIKARQQRLNHKPFEFTLDVTSDKAQDAVVKVFIGPKYDEHGHEIPLEHNYQNFFELEHFKVHLEAGVNHIKRASGDFSFWVNDRTTYLELYQKLMDATNSDYKFKLDQSEAHCGVPNRMMLPRGKKGGQVFQFFYMVYPYHQPEVAQFTGYDPVVSCGVGHGSRYVDALPFGFPFNRPVKHDYYFDVHNFKFVDVKIFHRDEHTNVV.

The first 21 residues, 1 to 21 (MKSFTVIALAAVALLATLGQA), serve as a signal peptide directing secretion. N-linked (GlcNAc...) asparagine glycosylation occurs at Asn204.

Belongs to the hemocyanin family. In terms of assembly, homohexamer.

Its subcellular location is the secreted. The protein resides in the extracellular space. Its function is as follows. Larval storage protein (LSP) which may serve as a store of amino acids for synthesis of adult proteins. The chain is Larval serum protein 2 (Lsp2) from Drosophila melanogaster (Fruit fly).